The sequence spans 234 residues: 7-cyano-7-deazaguanine synthase (234 aa).

ATP is bound at residue 13–23; sequence FSGGIDSTTCL. Residues Cys197, Cys207, Cys210, and Cys213 each coordinate Zn(2+).

This sequence belongs to the QueC family. The cofactor is Zn(2+).

It carries out the reaction 7-carboxy-7-deazaguanine + NH4(+) + ATP = 7-cyano-7-deazaguanine + ADP + phosphate + H2O + H(+). It functions in the pathway purine metabolism; 7-cyano-7-deazaguanine biosynthesis. Its function is as follows. Catalyzes the ATP-dependent conversion of 7-carboxy-7-deazaguanine (CDG) to 7-cyano-7-deazaguanine (preQ(0)). In Syntrophobacter fumaroxidans (strain DSM 10017 / MPOB), this protein is 7-cyano-7-deazaguanine synthase.